Here is a 128-residue protein sequence, read N- to C-terminus: Kinetoplast-associated protein 4 (128 aa).

The propeptide occupies 1–10; it reads MLRFVPRRLA. The interval 60–87 is disordered; sequence AHPGFKRKEKEPKELKAAKAAKTSTPRA. A compositionally biased stretch (basic and acidic residues) spans 65–76; the sequence is KRKEKEPKELKA.

This sequence belongs to the KAP family. As to quaternary structure, associates with the kinetoplast DNA network.

Its subcellular location is the mitochondrion matrix. The protein localises to the kinetoplast. In terms of biological role, histone H1-like DNA-binding protein involved in the organization and segregation of kinetoplast DNA (kDNA). The mitochondrial DNA of kinetoplastid protozoa consists of about 5,000 minicircles and 20 to 30 maxicircles. These circular DNAs are held together by catenation into a highly organized compact disk structure referred to as a kinetoplast DNA (kDNA) network. Binds preferentially to a specific fragment of minicircle DNA and is able to compact kDNA networks through DNA charge neutralization and condensation. The chain is Kinetoplast-associated protein 4 (KAP4) from Crithidia fasciculata.